A 425-amino-acid polypeptide reads, in one-letter code: Ribonuclease T2-like (425 aa).

The N-terminal stretch at 1-18 (MLLNKGLLASLLAYTTTA) is a signal peptide. Cystine bridges form between Cys-32/Cys-51, Cys-40/Cys-99, Cys-50/Cys-175, Cys-107/Cys-167, and Cys-245/Cys-281. An N-linked (GlcNAc...) asparagine glycan is attached at Asn-42. His-92 is a catalytic residue. N-linked (GlcNAc...) asparagine glycosylation is present at Asn-134. Active-site residues include Glu-160 and His-164.

This sequence belongs to the RNase T2 family.

Its subcellular location is the vacuole lumen. The protein resides in the cytoplasm. It carries out the reaction a ribonucleotidyl-ribonucleotide-RNA + H2O = a 3'-end 3'-phospho-ribonucleotide-RNA + a 5'-end dephospho-ribonucleoside-RNA + H(+). Rnase which modulates cell survival under stress conditions. Released from the vacuole to the cytoplasm during stress to promote tRNA and rRNA cleavage and to activate separately a downstream pathway that promotes cell death. Involved in cell size, vacuolar morphology and growth at high temperatures and high salt concentration. The polypeptide is Ribonuclease T2-like (RNY1) (Kluyveromyces lactis (strain ATCC 8585 / CBS 2359 / DSM 70799 / NBRC 1267 / NRRL Y-1140 / WM37) (Yeast)).